The primary structure comprises 91 residues: MRWPLIVLAVLVIVLQYPLWLGKGGWLRVWDVDRQLQAQRETNQRLEQRNAGLEAEVRDLKSGNEAVEERARFELGLTKPDEIFVHTPRKP.

Residues 1–3 lie on the Cytoplasmic side of the membrane; that stretch reads MRW. A helical transmembrane segment spans residues 4–21; the sequence is PLIVLAVLVIVLQYPLWL. Topologically, residues 22–91 are periplasmic; it reads GKGGWLRVWD…EIFVHTPRKP (70 aa). Residues 28-74 adopt a coiled-coil conformation; it reads RVWDVDRQLQAQRETNQRLEQRNAGLEAEVRDLKSGNEAVEERARFE.

The protein belongs to the FtsB family. In terms of assembly, part of a complex composed of FtsB, FtsL and FtsQ.

Its subcellular location is the cell inner membrane. Functionally, essential cell division protein. May link together the upstream cell division proteins, which are predominantly cytoplasmic, with the downstream cell division proteins, which are predominantly periplasmic. In Aromatoleum aromaticum (strain DSM 19018 / LMG 30748 / EbN1) (Azoarcus sp. (strain EbN1)), this protein is Cell division protein FtsB.